Consider the following 303-residue polypeptide: MAAAAAWTGAASPNSLLLSRSPPHAAALAPSPGSSMRRRLLLGVGTPAVAALAAAAPPAVLQDGAVTVLITAGAYSLVRVFDELTERRLIEKSLSRKVVHVLSGVLFMSSWPLFSNSTEARYFAAVVPFLNSMRLLIYGLRLYTDEALVKSVTREGKPEELLRGPLYYVLVLLFSVLVFWRESPIGIVSLSMMSGGDGFADIVGRRYGSAKLPFNRKKSWAGSISMFISGFLLSAMMMLYFSSLGYIDVIWEEALGKLALVALAATVVECVPVTEVVDDNISVPLATMLVAFLLFSSNRTIVN.

The N-terminal 49 residues, 1–49 (MAAAAAWTGAASPNSLLLSRSPPHAAALAPSPGSSMRRRLLLGVGTPAV), are a transit peptide targeting the chloroplast. The next 6 helical transmembrane spans lie at 98–118 (VVHVLSGVLFMSSWPLFSNST), 122–144 (YFAAVVPFLNSMRLLIYGLRLYT), 168–188 (YVLVLLFSVLVFWRESPIGIV), 227–247 (FISGFLLSAMMMLYFSSLGYI), 254–274 (ALGKLALVALAATVVECVPVT), and 276–296 (VVDDNISVPLATMLVAFLLFS).

The protein belongs to the polyprenol kinase family.

It localises to the plastid. The protein localises to the chloroplast membrane. The catalysed reaction is phytol + CTP = phytyl phosphate + CDP + H(+). Its pathway is cofactor biosynthesis; tocopherol biosynthesis. Its function is as follows. Involved in the activation and reutilization of phytol from chlorophyll degradation in plant metabolism, including tocopherol biosynthesis. Catalyzes the conversion of phytol to phytol monophosphate (PMP). The polypeptide is Probable phytol kinase, chloroplastic (Zea mays (Maize)).